The primary structure comprises 146 residues: Large ribosomal subunit protein uL15 (146 aa).

The span at 1–13 (MKLHELKPAEGSR) shows a compositional bias: basic and acidic residues. A disordered region spans residues 1 to 59 (MKLHELKPAEGSRKVRNRVGRGTSSGNGKTSGRGQKGQKARSGGGVRLGFEGGQTPLFR). Gly residues-rich tracts occupy residues 23-35 (TSSG…GRGQ) and 42-52 (SGGGVRLGFEG).

It belongs to the universal ribosomal protein uL15 family. In terms of assembly, part of the 50S ribosomal subunit.

In terms of biological role, binds to the 23S rRNA. The protein is Large ribosomal subunit protein uL15 of Streptococcus agalactiae serotype Ia (strain ATCC 27591 / A909 / CDC SS700).